The chain runs to 364 residues: 1-acyl-sn-glycerol-3-phosphate acyltransferase epsilon (364 aa).

2 helical membrane-spanning segments follow: residues 15–35 (LLPS…WGVW) and 61–81 (MVLF…GDLP). The HXXXXD motif signature appears at 93 to 98 (HQSTVD). A helical membrane pass occupies residues 344 to 364 (LYVNTWIYGTLLGCLWVTIKA).

The protein belongs to the 1-acyl-sn-glycerol-3-phosphate acyltransferase family. Widely expressed.

It is found in the endoplasmic reticulum membrane. Its subcellular location is the nucleus envelope. The protein localises to the mitochondrion. The enzyme catalyses a 1-acyl-sn-glycero-3-phosphate + an acyl-CoA = a 1,2-diacyl-sn-glycero-3-phosphate + CoA. The catalysed reaction is 1-(9Z-octadecenoyl)-sn-glycero-3-phosphate + tetradecanoyl-CoA = 1-(9Z)-octadecenoyl-2-tetradecanoyl-sn-glycero-3-phosphate + CoA. It carries out the reaction pentadecanoyl-CoA + 1-(9Z-octadecenoyl)-sn-glycero-3-phosphate = 1-(9Z)-octadecenoyl-2-pentadecanoyl-sn-glycero-3-phosphate + CoA. It catalyses the reaction 1-(9Z-octadecenoyl)-sn-glycero-3-phosphate + octadecanoyl-CoA = 1-(9Z-octadecenoyl)-2-octadecanoyl-sn-glycero-3-phosphate + CoA. The enzyme catalyses nonadecanoyl-CoA + 1-(9Z-octadecenoyl)-sn-glycero-3-phosphate = 1-(9Z)-octadecenoyl-2-nonadecanoyl-sn-glycero-3-phosphate + CoA. The catalysed reaction is 1-(9Z-octadecenoyl)-sn-glycero-3-phosphoethanolamine + (9Z)-octadecenoyl-CoA = 1,2-di-(9Z-octadecenoyl)-sn-glycero-3-phosphoethanolamine + CoA. It carries out the reaction 1-(9Z-octadecenoyl)-sn-glycero-3-phosphocholine + (9Z)-octadecenoyl-CoA = 1,2-di-(9Z-octadecenoyl)-sn-glycero-3-phosphocholine + CoA. It catalyses the reaction 1-(9Z-octadecenoyl)-sn-glycero-3-phospho-(1D-myo-inositol) + (5Z,8Z,11Z,14Z)-eicosatetraenoyl-CoA = 1-(9Z-octadecenoyl)-2-(5Z,8Z,11Z,14Z-eicosatetraenoyl)-sn-glycero-3-phospho-1D-myo-inositol + CoA. The enzyme catalyses 1-(9Z-octadecenoyl)-sn-glycero-3-phospho-L-serine + (9Z)-octadecenoyl-CoA = 1,2-di-(9Z)-octadecenoyl-sn-glycero-3-phospho-L-serine + CoA. The catalysed reaction is 1-(9Z-octadecenoyl)-sn-glycero-3-phospho-L-serine + (5Z,8Z,11Z,14Z)-eicosatetraenoyl-CoA = 1-(9Z-octadecenoyl)-2-(5Z,8Z,11Z,14Z-eicosatetraenoyl)-sn-glycero-3-phospho-L-serine + CoA. It carries out the reaction 1-hexadecanoyl-sn-glycero-3-phosphate + (9Z)-octadecenoyl-CoA = 1-hexadecanoyl-2-(9Z-octadecenoyl)-sn-glycero-3-phosphate + CoA. It catalyses the reaction 1-heptadecanoyl-sn-glycero-3-phosphate + (9Z)-octadecenoyl-CoA = 1-heptadecanoyl-2-(9Z)-octadecenoyl-sn-glycero-3-phosphate + CoA. The enzyme catalyses 1-(5Z,8Z,11Z,14Z-eicosatetraenoyl)-sn-glycero-3-phosphate + (9Z)-octadecenoyl-CoA = 1-(5Z,8Z,11Z,14Z)-eicosatetraenoyl-2-(9Z)-octadecenoyl-sn-glycero-3-phosphate + CoA. The catalysed reaction is 1-octadecanoyl-sn-glycero-3-phosphate + (9Z)-octadecenoyl-CoA = 1-octadecanoyl-2-(9Z-octadecenoyl)-sn-glycero-3-phosphate + CoA. It carries out the reaction 1-(9Z-octadecenoyl)-sn-glycero-3-phosphate + (5Z,8Z,11Z,14Z)-eicosatetraenoyl-CoA = 1-(9Z)-octadecenoyl-2-(5Z,8Z,11Z,14Z)-eicosatetraenoyl-sn-glycero-3-phosphate + CoA. It catalyses the reaction heptadecanoyl-CoA + 1-(9Z-octadecenoyl)-sn-glycero-3-phosphate = 1-(9Z)-octadecenoyl-2-heptadecanoyl-sn-glycero-3-phosphate + CoA. The enzyme catalyses 1-(9Z-octadecenoyl)-sn-glycero-3-phosphocholine + (5Z,8Z,11Z,14Z)-eicosatetraenoyl-CoA = 1-(9Z)-octadecenoyl-2-(5Z,8Z,11Z,14Z)-icosatetraenoyl-sn-glycero-3-phosphocholine + CoA. The catalysed reaction is 1-(9Z-octadecenoyl)-sn-glycero-3-phosphate + (9Z)-octadecenoyl-CoA = 1,2-di-(9Z-octadecenoyl)-sn-glycero-3-phosphate + CoA. It carries out the reaction 1-(9Z-octadecenoyl)-sn-glycero-3-phosphate + hexadecanoyl-CoA = 1-hexadecanoyl-2-(9Z-octadecenoyl)-sn-glycero-3-phosphate + CoA. It participates in phospholipid metabolism; CDP-diacylglycerol biosynthesis; CDP-diacylglycerol from sn-glycerol 3-phosphate: step 2/3. Functionally, converts 1-acyl-sn-glycerol-3-phosphate (lysophosphatidic acid or LPA) into 1,2-diacyl-sn-glycerol-3-phosphate (phosphatidic acid or PA) by incorporating an acyl moiety at the sn-2 position of the glycerol backbone. Acts on LPA containing saturated or unsaturated fatty acids C15:0-C20:4 at the sn-1 position using C18:1-CoA as the acyl donor. Also acts on lysophosphatidylethanolamine using oleoyl-CoA, but not arachidonoyl-CoA, and lysophosphatidylinositol using arachidonoyl-CoA, but not oleoyl-CoA. Activity toward lysophosphatidylglycerol not detectable. This Homo sapiens (Human) protein is 1-acyl-sn-glycerol-3-phosphate acyltransferase epsilon (AGPAT5).